The primary structure comprises 409 residues: Broad specificity amino-acid racemase (409 aa).

The signal sequence occupies residues 1 to 24; the sequence is MPFRRTLLAASLVLLITGQAPLYA. Cys71 and Cys97 form a disulfide bridge. Residue Lys75 is the Proton acceptor of the active site. Position 75 is an N6-(pyridoxal phosphate)lysine (Lys75). Arg174 contributes to the substrate binding site. The active-site Proton acceptor is Tyr301. Met349 provides a ligand contact to substrate.

This sequence belongs to the alanine racemase family. Bsr subfamily. Monomer. Forms a head-to-tail homodimer in the structure. Pyridoxal 5'-phosphate is required as a cofactor.

The protein resides in the periplasm. It catalyses the reaction an L-alpha-amino acid = a D-alpha-amino acid. The enzyme catalyses L-lysine = D-lysine. It carries out the reaction L-arginine = D-arginine. The catalysed reaction is L-alanine = D-alanine. Its activity is regulated as follows. Activity is enhanced by Co(2+), Mn(2+) and Sr(2+), and decreased by Cu(2+). Amino-acid racemase that catalyzes the interconversion of L-lysine and D-lysine, and L-arginine and D-arginine. To a lesser extent, is also able to interconvert alanine and isoleucine enantiomers. This is Broad specificity amino-acid racemase from Pseudomonas putida (Arthrobacter siderocapsulatus).